We begin with the raw amino-acid sequence, 450 residues long: Serine incorporator 2 (450 aa).

11 helical membrane-spanning segments follow: residues 5–27 (LGACSLLSCASCLCGSAPCILCG), 40–57 (LLFTSFLFLGVLVSIIML), 96–118 (AVYRMCFATAAFFFFFMLLMICV), 131–150 (GFWFFKFLILVGITVGAFYI), 160–182 (FYFGVVGSFLFILIQLILFVDFA), 203–225 (AGLFFFTFLFYLLSIAAVALMFV), 238–257 (VFISLNLTFCVCVSIIAVLP), 264–286 (PNSGLLQASVITLYTMFVTWSAL), 315–337 (VWWDAPSIVGLVIFILCTFFISL), 380–402 (TYSYSFFHFCLVLASLHVMMTLT), and 417–439 (WTSVWVKICASWAGLFLYLWTLV).

Belongs to the TDE1 family.

It is found in the cell membrane. The catalysed reaction is a 1,2-diacyl-sn-glycero-3-phospho-L-serine(in) = a 1,2-diacyl-sn-glycero-3-phospho-L-serine(out). It carries out the reaction a 1,2-diacyl-sn-glycero-3-phosphocholine(in) = a 1,2-diacyl-sn-glycero-3-phosphocholine(out). The enzyme catalyses a 1,2-diacyl-sn-glycero-3-phosphoethanolamine(in) = a 1,2-diacyl-sn-glycero-3-phosphoethanolamine(out). In terms of biological role, non-ATP-dependent, non-specific lipid transporter for phosphatidylserine, phosphatidylcholine, and phosphatidylethanolamine. Functions as a scramblase that flips lipids in both directions across the membrane. In contrast to SERINC3 and SERINC5, has no effect on gammaretrovirus particles infectivity. The polypeptide is Serine incorporator 2 (Serinc2) (Mus musculus (Mouse)).